We begin with the raw amino-acid sequence, 588 residues long: Probable cytochrome c oxidase subunit 1-beta (588 aa).

The segment at 1 to 26 is disordered; that stretch reads MTATPAQRRPALPATRPYPARHGPKG. A helical membrane pass occupies residues 43–63; sequence VLYLVSATGFFLIGGLLALLM. H87 contacts Fe(II)-heme a. The next 6 helical transmembrane spans lie at 90–110, 128–148, 171–191, 214–234, 259–279, and 291–311; these read IMLL…VLPL, WLYL…GGAA, LWIL…VNMI, ILIT…ALMA, LFWF…FGII, and IFGY…SMAV. Cu cation-binding residues include H265 and Y269. Positions 265–269 form a cross-link, 1'-histidyl-3'-tyrosine (His-Tyr); it reads HPEVY. H314 and H315 together coordinate Cu cation. The next 2 membrane-spanning stretches (helical) occupy residues 320–340 and 360–380; these read GAVL…PTGV and MLFA…GVIL. H398 contacts heme a3. A run of 3 helical transmembrane segments spans residues 399–419, 434–454, and 477–497; these read FHYV…YFWF, LHFW…HWLG, and VSTI…WNGF. Fe(II)-heme a is bound at residue H400. The disordered stretch occupies residues 557–588; it reads AEAHAGRRAGHGAGAELSVPSTVATKDDDHTS.

This sequence belongs to the heme-copper respiratory oxidase family. Associates with subunits II, III and IV to form cytochrome c oxidase. It depends on Cu(2+) as a cofactor. Requires heme as cofactor.

It is found in the cell membrane. The catalysed reaction is 4 Fe(II)-[cytochrome c] + O2 + 8 H(+)(in) = 4 Fe(III)-[cytochrome c] + 2 H2O + 4 H(+)(out). Its pathway is energy metabolism; oxidative phosphorylation. Cytochrome c oxidase is the component of the respiratory chain that catalyzes the reduction of oxygen to water. Subunits 1-3 form the functional core of the enzyme complex. CO I is the catalytic subunit of the enzyme. Electrons originating in cytochrome c are transferred via the copper A center of subunit 2 and heme A of subunit 1 to the bimetallic center formed by heme A3 and copper B. The protein is Probable cytochrome c oxidase subunit 1-beta (ctaD2) of Nocardia farcinica (strain IFM 10152).